The chain runs to 673 residues: Polyunsaturated fatty acid 5-lipoxygenase (673 aa).

Positions Pro-2–Lys-117 constitute a PLAT domain. Positions 17, 18, 19, 44, 45, 47, 79, and 80 each coordinate Ca(2+). The region spanning Leu-118–Ile-673 is the Lipoxygenase domain. At Ser-271 the chain carries Phosphoserine. The Fe cation site is built by His-367 and His-372. The residue at position 523 (Ser-523) is a Phosphoserine. His-550, Asn-554, and Ile-673 together coordinate Fe cation.

This sequence belongs to the lipoxygenase family. In terms of assembly, homodimer. Interacts with ALOX5AP and LTC4S. Interacts with COTL1, the interaction is required for stability and efficient catalytic activity. Interacts with PIK3R1; this interaction bridges ALOX5 with CD40 after CD40 ligation in B cells and leads to the production of reactive oxygen species (ROS). Interacts (via PLAT domain) with DICER1 (via Dicer dsRNA-binding fold domain); this interaction enhances arachidonate 5-lipoxygenase activity and modifies the miRNA precursor processing activity of DICER1. Fe cation serves as cofactor. In terms of processing, serine phosphorylation by MAPKAPK2 is stimulated by arachidonic acid. Phosphorylation on Ser-523 by PKA has an inhibitory effect. Phosphorylation on Ser-271 prevents export from the nucleus. Phosphorylation at Ser-523 is stimulated by 8-bromo-3',5'-cyclic AMP or prostaglandin E2.

The protein localises to the cytoplasm. Its subcellular location is the nucleus matrix. The protein resides in the nucleus membrane. It localises to the perinuclear region. It is found in the cytosol. The protein localises to the nucleus envelope. Its subcellular location is the nucleus intermembrane space. It catalyses the reaction (5Z,8Z,11Z,14Z)-eicosatetraenoate + O2 = leukotriene A4 + H2O. The catalysed reaction is 18-HEPE + O2 = (5S)-hydroperoxy-18-hydroxy-(7E,9E,11Z,14Z,16E)-eicosapentaenoate. It carries out the reaction (18R)-hydroxy-(5Z,8Z,11Z,14Z,16E)-eicosapentaenoate + O2 = (5S)-hydroperoxy-(18R)-hydroxy-(6E,8Z,11Z,14Z,16E)-eicosapentaenoate. The enzyme catalyses (18S)-hydroxy-(5Z,8Z,11Z,14Z,16E)-eicosapentaenoate + O2 = (5S)-hydroperoxy-(18S)-hydroxy-(6E,8Z,11Z,14Z,16E)-eicosapentaenoate. It catalyses the reaction (5S)-hydroperoxy-(18S)-hydroxy-(6E,8Z,11Z,14Z,16E)-eicosapentaenoate = (5S,6S)-epoxy-(18S)-hydroxy-(7E,9E,11Z,14Z,16E)-eicosapentaenoate + H2O. The catalysed reaction is (5S)-hydroperoxy-(18R)-hydroxy-(6E,8Z,11Z,14Z,16E)-eicosapentaenoate = (5S,6S)-epoxy-(18R)-hydroxy-(7E,9E,11Z,14Z,16E)-eicosapentaenoate + H2O. It carries out the reaction (5S)-hydroperoxy-18-hydroxy-(7E,9E,11Z,14Z,16E)-eicosapentaenoate = (5S,6S)-epoxy-18-hydroxy-(7E,9E,11Z,14Z,16E)-eicosapentaenoate + H2O. The enzyme catalyses (5Z,8Z,11Z,14Z)-eicosatetraenoate + O2 = (5S)-hydroperoxy-(6E,8Z,11Z,14Z)-eicosatetraenoate. It catalyses the reaction (15S)-hydroxy-(5Z,8Z,11Z,13E)-eicosatetraenoate + O2 = (5S)-hydroperoxy-(15S)-hydroxy-(6E,8Z,11Z,13E)-eicosatetraenoate. The catalysed reaction is (5S)-hydroperoxy-(6E,8Z,11Z,14Z)-eicosatetraenoate = leukotriene A4 + H2O. It carries out the reaction (5Z,8Z,11Z,14Z)-eicosatetraenoate + O2 = (8S)-hydroperoxy-(5Z,9E,11Z,14Z)-eicosatetraenoate. The enzyme catalyses (5Z,8Z,11Z,14Z)-eicosatetraenoate + O2 = (12S)-hydroperoxy-(5Z,8Z,10E,14Z)-eicosatetraenoate. It catalyses the reaction (5Z,8Z)-eicosadienoate + O2 = (5S)-hydroperoxy-(6E,8Z)-eicosadienoate. The catalysed reaction is (12S)-hydroxy-(5Z,8Z,10E,14Z)-eicosatetraenoate + O2 = (5S)-hydroperoxy-(12S)-hydroxy-(6E,8Z,10E,14Z)-eicosatetraenoate. It carries out the reaction (5Z,8Z,11Z,14Z,17Z)-eicosapentaenoate + O2 = 5-hydroperoxy-(6E,8Z,11Z,14Z,17Z)-eicosapentaenoate. The enzyme catalyses (4Z,7Z,10Z,13Z,16Z,19Z)-docosahexaenoate + O2 = (14S)-hydroperoxy-(4Z,7Z,10Z,12E,16Z,19Z)-docosahexaenoate. It catalyses the reaction (4Z,7Z,10Z,13Z,16Z,19Z)-docosahexaenoate + O2 = (7S)-hydroperoxy-(4Z,8E,10Z,13Z,16Z,19Z)-docosahexaenoate. The catalysed reaction is (4Z,7Z,10Z,13Z,16Z,19Z)-docosahexaenoate + O2 = (17S)-hydroperoxy-(4Z,7Z,10Z,13Z,15E,19Z)-docosahexaenoate. Its pathway is lipid metabolism; leukotriene A4 biosynthesis. In terms of biological role, catalyzes the oxygenation of arachidonate to 5-hydroperoxyeicosatetraenoate (5-HPETE) followed by the dehydration to 5,6- epoxyeicosatetraenoate (Leukotriene A4/LTA4), the first two steps in the biosynthesis of leukotrienes, which are potent mediators of inflammation. Also catalyzes the oxygenation of arachidonate into 8-hydroperoxyicosatetraenoate (8-HPETE) and 12-hydroperoxyicosatetraenoate (12-HPETE). Displays lipoxin synthase activity being able to convert (15S)-HETE into a conjugate tetraene. Although arachidonate is the preferred substrate, this enzyme can also metabolize oxidized fatty acids derived from arachidonate such as (15S)-HETE, eicosapentaenoate (EPA) such as (18R)- and (18S)-HEPE or docosahexaenoate (DHA) which lead to the formation of specialized pro-resolving mediators (SPM) lipoxin and resolvins E and D respectively, therefore it participates in anti-inflammatory responses. Oxidation of DHA directly inhibits endothelial cell proliferation and sprouting angiogenesis via peroxisome proliferator-activated receptor gamma (PPARgamma). It does not catalyze the oxygenation of linoleic acid and does not convert (5S)-HETE to lipoxin isomers. In addition to inflammatory processes, it participates in dendritic cell migration, wound healing through an antioxidant mechanism based on heme oxygenase-1 (HO-1) regulation expression, monocyte adhesion to the endothelium via ITGAM expression on monocytes. Moreover, it helps establish an adaptive humoral immunity by regulating primary resting B cells and follicular helper T cells and participates in the CD40-induced production of reactive oxygen species (ROS) after CD40 ligation in B cells through interaction with PIK3R1 that bridges ALOX5 with CD40. May also play a role in glucose homeostasis, regulation of insulin secretion and palmitic acid-induced insulin resistance via AMPK. Can regulate bone mineralization and fat cell differentiation increases in induced pluripotent stem cells. The chain is Polyunsaturated fatty acid 5-lipoxygenase from Mesocricetus auratus (Golden hamster).